A 283-amino-acid chain; its full sequence is Protease HtpX (283 aa).

The next 2 helical transmembrane spans lie at 4 to 24 (ILLF…ILSV) and 33 to 53 (GGIL…SLFL). Histidine 139 is a Zn(2+) binding site. Glutamate 140 is a catalytic residue. Histidine 143 is a binding site for Zn(2+). 2 consecutive transmembrane segments (helical) span residues 147 to 167 (GDMV…IFLS) and 190 to 210 (IYFL…SIIA). Residue glutamate 218 participates in Zn(2+) binding.

Belongs to the peptidase M48B family. Zn(2+) serves as cofactor.

It is found in the cell inner membrane. The protein is Protease HtpX of Haemophilus influenzae (strain PittEE).